A 305-amino-acid polypeptide reads, in one-letter code: Acetylglutamate kinase (305 aa).

Substrate contacts are provided by residues 67-68, Arg-89, and Asn-190; that span reads GG.

It belongs to the acetylglutamate kinase family. ArgB subfamily.

The protein localises to the cytoplasm. The catalysed reaction is N-acetyl-L-glutamate + ATP = N-acetyl-L-glutamyl 5-phosphate + ADP. It participates in amino-acid biosynthesis; L-arginine biosynthesis; N(2)-acetyl-L-ornithine from L-glutamate: step 2/4. Functionally, catalyzes the ATP-dependent phosphorylation of N-acetyl-L-glutamate. In Bifidobacterium longum subsp. infantis (strain ATCC 15697 / DSM 20088 / JCM 1222 / NCTC 11817 / S12), this protein is Acetylglutamate kinase.